The sequence spans 581 residues: Zinc finger protein 319 (581 aa).

Low complexity predominate over residues 1-22 (MSESWQQPPQTQPQQPQAPQPQ). The tract at residues 1 to 39 (MSESWQQPPQTQPQQPQAPQPQHHAETPPALAEHTLPPG) is disordered. The C2H2-type 1 zinc-finger motif lies at 75-99 (PKCGVCGHDLAHLSSPHEHQCLAGH). The segment at 103–125 (FQCTQCLKIFHQATDLLEHQCVQ) adopts a C2H2-type 2; degenerate zinc-finger fold. Residue K129 forms a Glycyl lysine isopeptide (Lys-Gly) (interchain with G-Cter in SUMO2) linkage. C2H2-type zinc fingers lie at residues 131–153 (FVCG…HSSH), 201–223 (YSCP…ERIH), 229–251 (YKCT…KRTH), and 257–279 (YKCA…MYAH). Residue S280 is modified to Phosphoserine. The segment at 286 to 308 (FRCNVCELHFKESSELLQHPCTP) adopts a C2H2-type 7; degenerate zinc-finger fold. 3 C2H2-type zinc fingers span residues 314–336 (FRCG…ERTH), 342–364 (FKCD…RRTH), and 370–392 (FKCG…QHVH). The C2H2-type 11; degenerate zinc-finger motif lies at 398–420 (FKCPVCQKGFDQSAELLRHKCLP). A C2H2-type 12 zinc finger spans residues 427–449 (FKCPVCNKAYKRASALQKHQLSH). The C2H2-type 13; degenerate zinc finger occupies 457–479 (LRCTLCERRFFSSSEFVQHRCDP). C2H2-type zinc fingers lie at residues 485 to 507 (LKCP…RRVH), 513 to 535 (YKCP…QGVH), and 541 to 563 (FKCV…SAQH).

Belongs to the krueppel C2H2-type zinc-finger protein family.

The protein resides in the nucleus. Its function is as follows. May be involved in transcriptional regulation. The polypeptide is Zinc finger protein 319 (Znf319) (Mus musculus (Mouse)).